The chain runs to 114 residues: U17-barytoxin-Tl1d (114 aa).

A signal peptide spans 1-20 (MKTIIVFLSLLVLATKFGDA). Positions 21-74 (NEGVNQEQMKEVIQNEFREDFLNEMAPMSLLQQLEAIESTLLEKEADRNSRQKR) are excised as a propeptide. 3 disulfide bridges follow: cysteine 75-cysteine 88, cysteine 82-cysteine 93, and cysteine 87-cysteine 108.

It belongs to the neurotoxin 14 (magi-1) family. 03 (ICK-30-40) subfamily. In terms of tissue distribution, expressed by the venom gland.

The protein resides in the secreted. In terms of biological role, ion channel inhibitor. The chain is U17-barytoxin-Tl1d from Trittame loki (Brush-footed trapdoor spider).